Reading from the N-terminus, the 278-residue chain is S-adenosylmethionine decarboxylase proenzyme (278 aa).

The disordered stretch occupies residues 96–115 (LTPESLTGESPGPLPGNKPS). The Schiff-base intermediate with substrate; via pyruvic acid role is filled by Ser-126. Ser-126 is modified (pyruvic acid (Ser); by autocatalysis). Catalysis depends on His-131, which acts as the Proton acceptor; for processing activity. Cys-154 acts as the Proton donor; for catalytic activity in catalysis.

The protein belongs to the prokaryotic AdoMetDC family. Type 2 subfamily. As to quaternary structure, heterooctamer of four alpha and four beta chains arranged as a tetramer of alpha/beta heterodimers. Pyruvate serves as cofactor. Post-translationally, is synthesized initially as an inactive proenzyme. Formation of the active enzyme involves a self-maturation process in which the active site pyruvoyl group is generated from an internal serine residue via an autocatalytic post-translational modification. Two non-identical subunits are generated from the proenzyme in this reaction, and the pyruvate is formed at the N-terminus of the alpha chain, which is derived from the carboxyl end of the proenzyme. The post-translation cleavage follows an unusual pathway, termed non-hydrolytic serinolysis, in which the side chain hydroxyl group of the serine supplies its oxygen atom to form the C-terminus of the beta chain, while the remainder of the serine residue undergoes an oxidative deamination to produce ammonia and the pyruvoyl group blocking the N-terminus of the alpha chain.

The enzyme catalyses S-adenosyl-L-methionine + H(+) = S-adenosyl 3-(methylsulfanyl)propylamine + CO2. The protein operates within amine and polyamine biosynthesis; S-adenosylmethioninamine biosynthesis; S-adenosylmethioninamine from S-adenosyl-L-methionine: step 1/1. Functionally, catalyzes the decarboxylation of S-adenosylmethionine to S-adenosylmethioninamine (dcAdoMet), the propylamine donor required for the synthesis of the polyamines spermine and spermidine from the diamine putrescine. The protein is S-adenosylmethionine decarboxylase proenzyme of Alkaliphilus metalliredigens (strain QYMF).